A 448-amino-acid polypeptide reads, in one-letter code: Na(+)-translocating NADH-quinone reductase subunit A (448 aa).

The protein belongs to the NqrA family. In terms of assembly, composed of six subunits; NqrA, NqrB, NqrC, NqrD, NqrE and NqrF.

It catalyses the reaction a ubiquinone + n Na(+)(in) + NADH + H(+) = a ubiquinol + n Na(+)(out) + NAD(+). NQR complex catalyzes the reduction of ubiquinone-1 to ubiquinol by two successive reactions, coupled with the transport of Na(+) ions from the cytoplasm to the periplasm. NqrA to NqrE are probably involved in the second step, the conversion of ubisemiquinone to ubiquinol. The chain is Na(+)-translocating NADH-quinone reductase subunit A from Glaesserella parasuis serovar 5 (strain SH0165) (Haemophilus parasuis).